We begin with the raw amino-acid sequence, 294 residues long: MLENLSTEHRNEKTMNLDEMNIKEVLQSMNEEDRTVALAVEKEIEHIEKVVRVVIQSFEEEGRLIYIGAGTSGRLGILDAVECPPTFGTDDKMVQGFIAGGLKAFTKAVEGAEDREELAEEDLKSIGLNEKDTVIGIAASGRTPYVIGGLKYANSVGASTASISCNKNAEISKYAKLNVEVETGAEILTGSTRLKAGTAQKLVLNMISTASMIGVGKVYKNLMVDVQSTNEKLVERSKRIIVEATGVSYEVAAEHYEKAERNVKAAIVMVLLQCEYGEALEKLKVAKGFVKKAL.

Positions valine 54 to lysine 217 constitute an SIS domain. Residue glutamate 82 is the Proton donor of the active site. Glutamate 113 is a catalytic residue.

The protein belongs to the GCKR-like family. MurNAc-6-P etherase subfamily. Homodimer.

The enzyme catalyses N-acetyl-D-muramate 6-phosphate + H2O = N-acetyl-D-glucosamine 6-phosphate + (R)-lactate. Its pathway is amino-sugar metabolism; N-acetylmuramate degradation. Its function is as follows. Specifically catalyzes the cleavage of the D-lactyl ether substituent of MurNAc 6-phosphate, producing GlcNAc 6-phosphate and D-lactate. This Bacillus cereus (strain ZK / E33L) protein is N-acetylmuramic acid 6-phosphate etherase.